We begin with the raw amino-acid sequence, 146 residues long: Large ribosomal subunit protein uL15 (146 aa).

Residues 1-64 (MELNSIKPAA…MPMHRRLPKR (64 aa)) form a disordered region. Residues 30–39 (TATKGHKGQK) show a composition bias toward basic residues.

Belongs to the universal ribosomal protein uL15 family. As to quaternary structure, part of the 50S ribosomal subunit.

Functionally, binds to the 23S rRNA. This chain is Large ribosomal subunit protein uL15, found in Geotalea daltonii (strain DSM 22248 / JCM 15807 / FRC-32) (Geobacter daltonii).